The sequence spans 319 residues: Forkhead box protein E3 (319 aa).

The segment at 1 to 69 (MAGRSDMDPP…GRRRRRPLQR (69 aa)) is disordered. Positions 44-53 (AAAGRGEAAP) are enriched in low complexity. Positions 71–165 (KPPYSYIALI…DNGSFLRRRK (95 aa)) form a DNA-binding region, fork-head.

The protein resides in the nucleus. In terms of biological role, transcription factor that controls lens epithelial cell growth through regulation of proliferation, apoptosis and cell cycle. During lens development, controls the ratio of the lens fiber cells to the cells of the anterior lens epithelium by regulating the rate of proliferation and differentiation. Controls lens vesicle closure and subsequent separation of the lens vesicle from ectoderm. Controls the expression of DNAJB1 in a pathway that is crucial for the development of the anterior segment of the eye. This is Forkhead box protein E3 (FOXE3) from Homo sapiens (Human).